The chain runs to 234 residues: MTNERHDELACLGIFPLKNPKQLDGVVTPILQLRVKFLAPTDRWWEGLVINKDLSKEESEELWKFLQSFDPRSAKFVGRGTPEDHVISYLFEAGKYEFEVFFYQKDHSLKLMGLYDKTQKQLLRRDSSGDLTSTDKERDVSPVSHSEKPYWDRYDLDQPSNQDVEESRNLVQEPKHRSKKYDRLGLDELVMEQTASLWKICSRNGMSVDEFLRFIRMGLESNFQHSNQVIPTHF.

Over residues 126-156 the composition is skewed to basic and acidic residues; the sequence is DSSGDLTSTDKERDVSPVSHSEKPYWDRYDL. The segment at 126–176 is disordered; sequence DSSGDLTSTDKERDVSPVSHSEKPYWDRYDLDQPSNQDVEESRNLVQEPKH. Residues Ser127 and Ser128 each carry the phosphoserine modification. Residue Thr132 is modified to Phosphothreonine. Position 141 is a phosphoserine (Ser141).

Its subcellular location is the cytoplasm. Functionally, has a role in meiosis. This Schizosaccharomyces pombe (strain 972 / ATCC 24843) (Fission yeast) protein is Meiotically up-regulated gene 35 protein (mug35).